We begin with the raw amino-acid sequence, 151 residues long: uncharacterized protein (151 aa).

The tract at residues 122 to 151 (GVAQRQVPTTGTHSFFHCTSEGNKEKPHHF) is disordered.

This is an uncharacterized protein from Homo sapiens (Human).